A 218-amino-acid polypeptide reads, in one-letter code: Protease PrsW (218 aa).

Residues 1 to 23 (MFAIISAGIAPGIALLSYFYLKD) traverse the membrane as a helical segment. Residues 24 to 30 (QYDNEPV) lie on the Cytoplasmic side of the membrane. The helical transmembrane segment at 31–53 (HMVLRSFFLGVVLVFPIMFIQYV) threads the bilayer. At 54–98 (LEKENVGGGSFFVSFLSSGFLEESLKWFILMISVYPHAHFDEHYD) the chain is on the extracellular side. Residues 99 to 121 (GIVYGASVSLGFATLENILYLIG) form a helical membrane-spanning segment. The Cytoplasmic segment spans residues 122-129 (HGVEHAFV). A helical membrane pass occupies residues 130–151 (RALLPVSCHALIGVIMGFYLGK). Residues 152–180 (ARFSADKARVKWLTLSLVVPSLLHGSYDF) lie on the Extracellular side of the membrane. Residues 181–203 (ILTALSNWIYYMLPFMVFLWWFG) traverse the membrane as a helical segment. Residues 204 to 218 (LRKAKKARSVNMMQV) lie on the Cytoplasmic side of the membrane.

This sequence belongs to the protease PrsW family.

It is found in the cell membrane. Involved in the degradation of anti-sigma-W factor RsiW. Responsible for Site-1 cleavage of the RsiW anti-sigma factor. This results, after two other proteolytic steps catalyzed by the RasP and ClpXP proteases, in the release of SigW and the transcription activation of the genes under the control of the sigma-W factor. Seems to be responsible for sensing antimicrobial peptides that damage the cell membrane and other agents that cause cell envelope stress. Therefore it is a protease governing regulated intramembrane proteolysis and resistance to antimicrobial peptides in B.subtilis. This chain is Protease PrsW, found in Bacillus subtilis (strain 168).